The primary structure comprises 284 residues: Tropomyosin (284 aa).

Residues 1–280 are a coiled coil; sequence MDAIKKKMQA…SDELDQTFAE (280 aa).

This sequence belongs to the tropomyosin family. Homodimer.

Its function is as follows. Tropomyosin, in association with the troponin complex, plays a central role in the calcium dependent regulation of muscle contraction. The polypeptide is Tropomyosin (Sinonovacula constricta (Razor clam)).